Consider the following 109-residue polypeptide: Protein ripply2 (109 aa).

Over residues 1-15 the composition is skewed to polar residues; the sequence is MENITFTSGLNSEMD. Disordered stretches follow at residues 1-42 and 88-109; these read MENI…RPAD and YEDP…KELR. The WRPW motif motif lies at 20–23; that stretch reads WRPW. Positions 30-42 are enriched in basic and acidic residues; that stretch reads KAPDYKPYKRPAD. Positions 53–88 are ripply homology domain; sequence HPVKLFWPKSQCFDYLYEDAEVLLRNYPVQATICLY. Residues 89–109 show a composition bias toward acidic residues; the sequence is EDPDTEDEEDYSDEEDEKELR.

This sequence belongs to the ripply family. First expressed in the paraxial mesoderm at the 90% epiboly stage, and subsequently confined to the presomitic mesoderm. Expressed in the rostral compartment of S-I and S-II.

It is found in the nucleus. Its function is as follows. Plays a role in somitogenesis. Required for somite segregation and establishment of rostrocaudal polarity in somites. The chain is Protein ripply2 from Danio rerio (Zebrafish).